Here is a 717-residue protein sequence, read N- to C-terminus: Protein E2 homolog (717 aa).

It belongs to the poxviridae E2 protein family.

The sequence is that of Protein E2 homolog from Fowlpox virus (strain NVSL) (FPV).